Consider the following 217-residue polypeptide: Probable transaldolase (217 aa).

Lys-83 (schiff-base intermediate with substrate) is an active-site residue.

Belongs to the transaldolase family. Type 3B subfamily.

It is found in the cytoplasm. The catalysed reaction is D-sedoheptulose 7-phosphate + D-glyceraldehyde 3-phosphate = D-erythrose 4-phosphate + beta-D-fructose 6-phosphate. The protein operates within carbohydrate degradation; pentose phosphate pathway; D-glyceraldehyde 3-phosphate and beta-D-fructose 6-phosphate from D-ribose 5-phosphate and D-xylulose 5-phosphate (non-oxidative stage): step 2/3. Its function is as follows. Transaldolase is important for the balance of metabolites in the pentose-phosphate pathway. This chain is Probable transaldolase, found in Bartonella bacilliformis (strain ATCC 35685 / KC583 / Herrer 020/F12,63).